The chain runs to 352 residues: Ly6/PLAUR domain-containing protein 3 (352 aa).

Residues 1–32 (MDAARRGDTQPVMWTTRWLLLLPLLLCEGAQA) form the signal peptide. Residues 35 to 128 (CYSCVQKADD…LNLTLRGLNP (94 aa)) form the UPAR/Ly6 1 domain. Asn120, Asn131, Asn178, and Asn185 each carry an N-linked (GlcNAc...) asparagine glycan. Residues 142 to 224 (CYSCMGLSRE…GSCCQGPRCN (83 aa)) enclose the UPAR/Ly6 2 domain. Residues 236 to 249 (RIPPLVLLPPPTTP) show a composition bias toward pro residues. Residues 236–330 (RIPPLVLLPP…KGGAQIPSKG (95 aa)) form a disordered region. The segment covering 250 to 285 (APSTRTQNSSSTTSTTAPTTATTTIKPTTVQASHTS) has biased composition (low complexity). Composition is skewed to basic and acidic residues over residues 286–300 (STHE…EEGS) and 309–320 (HQDRSNMGKFPE). The GPI-anchor amidated glycine moiety is linked to residue Gly330. Positions 331–352 (GSDALGSWLSAILLTVVAGAML) are cleaved as a propeptide — removed in mature form.

In terms of assembly, interacts with AGR2 and AGR3. Binds laminin-1 and laminin-5. Interacts with LGALS3. In terms of tissue distribution, found predominantly on the basal layers of squamous epithelium. Expressed in the gravid uterus and on epithelial of the upper gastrointestinal tract. It has been found in tumor lines which metastasize via the lymphatic system.

The protein localises to the cell membrane. Functionally, supports cell migration. May be involved in tumor progression. This is Ly6/PLAUR domain-containing protein 3 (Lypd3) from Rattus norvegicus (Rat).